The chain runs to 380 residues: L-lactate dehydrogenase (380 aa).

In terms of domain architecture, FMN hydroxy acid dehydrogenase spans 1 to 380; sequence MIISASTDYR…SADSLVQGLR (380 aa). Tyr24 is a substrate binding site. Positions 106 and 127 each coordinate FMN. Tyr129 is a substrate binding site. Thr155 contributes to the FMN binding site. Arg164 contacts substrate. Residue Lys251 participates in FMN binding. His275 serves as the catalytic Proton acceptor. Residue Arg278 participates in substrate binding. Residue 306-330 coordinates FMN; sequence DSGIRSGLDVVRMIALGADGVLLGR.

The protein belongs to the FMN-dependent alpha-hydroxy acid dehydrogenase family. The cofactor is FMN.

It localises to the cell inner membrane. The enzyme catalyses (S)-lactate + A = pyruvate + AH2. In terms of biological role, catalyzes the conversion of L-lactate to pyruvate. Is coupled to the respiratory chain. The polypeptide is L-lactate dehydrogenase (Serratia proteamaculans (strain 568)).